A 287-amino-acid chain; its full sequence is Phosphatidylinositol transfer protein 5 (287 aa).

A disordered region spans residues 252-287 (FHNNNNNNSNNSNNNNNNNTQPQRSSFFSRSTDGNK). The span at 254-270 (NNNNNNSNNSNNNNNNN) shows a compositional bias: low complexity. Polar residues predominate over residues 271-287 (TQPQRSSFFSRSTDGNK).

It belongs to the PtdIns transfer protein family. PI transfer class IIA subfamily.

In terms of biological role, phosphatidylinositol transfer proteins mediate the monomeric transport of lipids by shielding a lipid from the aqueous environment and binding the lipid in a hydrophobic cavity. The chain is Phosphatidylinositol transfer protein 5 (pitE) from Dictyostelium discoideum (Social amoeba).